A 605-amino-acid chain; its full sequence is Alpha-amylase (605 aa).

An N-terminal signal peptide occupies residues 1 to 33; it reads MGVRRSLAALLAALLGCATSLVALTVAASPAHA. Residues asparagine 130 and aspartate 189 each contribute to the Ca(2+) site. Aspartate 219 (nucleophile) is an active-site residue. Histidine 223 is a binding site for Ca(2+). Glutamate 253 serves as the catalytic Proton donor. One can recognise a CBM20 domain in the interval 500–605; sequence GDDCTTVTAR…CSQNFYDSWR (106 aa).

The protein belongs to the glycosyl hydrolase 13 family. In terms of assembly, monomer. The cofactor is Ca(2+).

The enzyme catalyses Endohydrolysis of (1-&gt;4)-alpha-D-glucosidic linkages in polysaccharides containing three or more (1-&gt;4)-alpha-linked D-glucose units.. This is Alpha-amylase (tam) from Thermomonospora curvata.